The following is a 251-amino-acid chain: Triosephosphate isomerase (251 aa).

9-11 contributes to the substrate binding site; that stretch reads NWK. Residue histidine 95 is the Electrophile of the active site. Glutamate 167 serves as the catalytic Proton acceptor. Residues glycine 173, serine 212, and 233–234 contribute to the substrate site; that span reads GG.

This sequence belongs to the triosephosphate isomerase family. Homodimer.

Its subcellular location is the cytoplasm. It carries out the reaction D-glyceraldehyde 3-phosphate = dihydroxyacetone phosphate. The protein operates within carbohydrate biosynthesis; gluconeogenesis. Its pathway is carbohydrate degradation; glycolysis; D-glyceraldehyde 3-phosphate from glycerone phosphate: step 1/1. Involved in the gluconeogenesis. Catalyzes stereospecifically the conversion of dihydroxyacetone phosphate (DHAP) to D-glyceraldehyde-3-phosphate (G3P). The sequence is that of Triosephosphate isomerase from Pseudomonas savastanoi pv. phaseolicola (strain 1448A / Race 6) (Pseudomonas syringae pv. phaseolicola (strain 1448A / Race 6)).